Here is a 149-residue protein sequence, read N- to C-terminus: Large ribosomal subunit protein uL13 (149 aa).

The protein belongs to the universal ribosomal protein uL13 family. In terms of assembly, part of the 50S ribosomal subunit.

Its function is as follows. This protein is one of the early assembly proteins of the 50S ribosomal subunit, although it is not seen to bind rRNA by itself. It is important during the early stages of 50S assembly. The polypeptide is Large ribosomal subunit protein uL13 (Bifidobacterium longum (strain DJO10A)).